The chain runs to 371 residues: Vasopressin V2 receptor (371 aa).

The interval 1–27 is disordered; sequence MILVSTTSAVPGALSSPSSPSNSSQEE. Residues 1–38 are Extracellular-facing; that stretch reads MILVSTTSAVPGALSSPSSPSNSSQEELLDDRDPLLVR. The span at 15-24 shows a compositional bias: low complexity; sequence SSPSSPSNSS. N-linked (GlcNAc...) asparagine glycosylation is present at N22. A helical transmembrane segment spans residues 39–63; the sequence is AELALLSTIFVAVALSNGLVLGALI. Over 64 to 77 the chain is Cytoplasmic; it reads RRGRRGRWAPMHVF. Residues 78–98 form a helical membrane-spanning segment; that stretch reads ISHLCLADLAVALFQVLPQLA. Over 99-113 the chain is Extracellular; sequence WDATDRFHGPDALCR. A helical transmembrane segment spans residues 114–135; that stretch reads AVKYLQMVGMYASSYMILAMTL. At 136 to 159 the chain is on the cytoplasmic side; the sequence is DRHRAICRPMLAYRHGGGARWNRP. A helical membrane pass occupies residues 160-180; the sequence is VLVAWAFSLLLSLPQLFIFAQ. Residues 181–200 lie on the Extracellular side of the membrane; sequence RDVGNGSGVFDCWARFAEPW. N185 carries N-linked (GlcNAc...) asparagine glycosylation. Residues 201 to 220 form a helical membrane-spanning segment; the sequence is GLRAYVTWIALMVFVAPALG. The Cytoplasmic portion of the chain corresponds to 221 to 271; sequence IAACQVLIFREIHASLVPGPSERAGRRRRGHRTGSPSEGAHVSAAMAKTVR. The segment at 240–259 is disordered; it reads PSERAGRRRRGHRTGSPSEG. A helical membrane pass occupies residues 272 to 293; that stretch reads MTLVIVIVYVLCWAPFFLVQLW. The Extracellular portion of the chain corresponds to 294–308; that stretch reads AAWDPEAPLERPPFV. The helical transmembrane segment at 309-328 threads the bilayer; sequence LLMLLASLNSCTNPWIYASF. Residues 329–371 lie on the Cytoplasmic side of the membrane; the sequence is SSSVSSELRSLLCCAQRHTTHSLGPQDESCATASSSLMKDTPS. 2 S-palmitoyl cysteine lipidation sites follow: C341 and C342. The tract at residues 349 to 371 is disordered; it reads HSLGPQDESCATASSSLMKDTPS. Polar residues predominate over residues 357-371; sequence SCATASSSLMKDTPS.

This sequence belongs to the G-protein coupled receptor 1 family. Vasopressin/oxytocin receptor subfamily. Interacts with ARRDC4. Identified in a complex containing at least ARRDC4, V2R and HGS. Interacts with TMEM147. In terms of tissue distribution, highly expressed in kidney (at protein level) and moderately expressed in liver (at protein level). No or extremely low expression in left ventricule, muscle, bone and brain (at protein level).

Its subcellular location is the cell membrane. Receptor for arginine vasopressin. The activity of this receptor is mediated by G proteins which activate adenylate cyclase. Involved in renal water reabsorption. The sequence is that of Vasopressin V2 receptor (Avpr2) from Mus musculus (Mouse).